The following is a 375-amino-acid chain: Eukaryotic translation initiation factor 3 subunit F (375 aa).

Positions 30 to 166 (VVIQPQALFS…TRAYISAPVG (137 aa)) constitute an MPN domain. Residues 307–375 (LGGESGSGES…EAQNGKEEKK (69 aa)) form a disordered region. Residues 323–332 (QRGGKGGRGG) show a composition bias toward gly residues. 2 stretches are compositionally biased toward basic and acidic residues: residues 336–345 (TQERSGEEAR) and 358–375 (RSYE…EEKK).

It belongs to the eIF-3 subunit F family. In terms of assembly, component of the eukaryotic translation initiation factor 3 (eIF-3) complex.

The protein localises to the cytoplasm. In terms of biological role, component of the eukaryotic translation initiation factor 3 (eIF-3) complex, which is involved in protein synthesis of a specialized repertoire of mRNAs and, together with other initiation factors, stimulates binding of mRNA and methionyl-tRNAi to the 40S ribosome. The eIF-3 complex specifically targets and initiates translation of a subset of mRNAs involved in cell proliferation. This is Eukaryotic translation initiation factor 3 subunit F from Aspergillus niger (strain ATCC MYA-4892 / CBS 513.88 / FGSC A1513).